The chain runs to 402 residues: tRNA(Met) cytidine acetate ligase (402 aa).

Residues 7 to 20 (ITEY…HELH), G102, N171, and R196 contribute to the ATP site.

This sequence belongs to the TmcAL family.

It is found in the cytoplasm. It carries out the reaction cytidine(34) in elongator tRNA(Met) + acetate + ATP = N(4)-acetylcytidine(34) in elongator tRNA(Met) + AMP + diphosphate. In terms of biological role, catalyzes the formation of N(4)-acetylcytidine (ac(4)C) at the wobble position of elongator tRNA(Met), using acetate and ATP as substrates. First activates an acetate ion to form acetyladenylate (Ac-AMP) and then transfers the acetyl group to tRNA to form ac(4)C34. The protein is tRNA(Met) cytidine acetate ligase of Clostridium perfringens (strain ATCC 13124 / DSM 756 / JCM 1290 / NCIMB 6125 / NCTC 8237 / Type A).